We begin with the raw amino-acid sequence, 259 residues long: Imidazole glycerol phosphate synthase subunit HisF (259 aa).

Active-site residues include Asp11 and Asp130.

It belongs to the HisA/HisF family. In terms of assembly, heterodimer of HisH and HisF.

The protein localises to the cytoplasm. It catalyses the reaction 5-[(5-phospho-1-deoxy-D-ribulos-1-ylimino)methylamino]-1-(5-phospho-beta-D-ribosyl)imidazole-4-carboxamide + L-glutamine = D-erythro-1-(imidazol-4-yl)glycerol 3-phosphate + 5-amino-1-(5-phospho-beta-D-ribosyl)imidazole-4-carboxamide + L-glutamate + H(+). It participates in amino-acid biosynthesis; L-histidine biosynthesis; L-histidine from 5-phospho-alpha-D-ribose 1-diphosphate: step 5/9. Its function is as follows. IGPS catalyzes the conversion of PRFAR and glutamine to IGP, AICAR and glutamate. The HisF subunit catalyzes the cyclization activity that produces IGP and AICAR from PRFAR using the ammonia provided by the HisH subunit. The protein is Imidazole glycerol phosphate synthase subunit HisF of Chloroflexus aurantiacus (strain ATCC 29366 / DSM 635 / J-10-fl).